A 432-amino-acid chain; its full sequence is Glutamyl-tRNA reductase (432 aa).

Residues 49–52 (TCNR), S107, 112–114 (ETQ), and Q118 contribute to the substrate site. The active-site Nucleophile is C50. Residue 186–191 (GAGEMG) coordinates NADP(+).

It belongs to the glutamyl-tRNA reductase family. In terms of assembly, homodimer.

It catalyses the reaction (S)-4-amino-5-oxopentanoate + tRNA(Glu) + NADP(+) = L-glutamyl-tRNA(Glu) + NADPH + H(+). It functions in the pathway porphyrin-containing compound metabolism; protoporphyrin-IX biosynthesis; 5-aminolevulinate from L-glutamyl-tRNA(Glu): step 1/2. In terms of biological role, catalyzes the NADPH-dependent reduction of glutamyl-tRNA(Glu) to glutamate 1-semialdehyde (GSA). This chain is Glutamyl-tRNA reductase, found in Campylobacter jejuni (strain RM1221).